The sequence spans 273 residues: Dermonecrotic toxin LhSicTox-alphaIA2bi (273 aa).

Residues E25 and D27 each coordinate Mg(2+). Catalysis depends on H41, which acts as the Nucleophile. 2 disulfides stabilise this stretch: C45-C51 and C47-C190. D85 lines the Mg(2+) pocket.

Belongs to the arthropod phospholipase D family. Class II subfamily. Mg(2+) serves as cofactor. In terms of tissue distribution, expressed by the venom gland.

The protein localises to the secreted. It catalyses the reaction an N-(acyl)-sphingosylphosphocholine = an N-(acyl)-sphingosyl-1,3-cyclic phosphate + choline. It carries out the reaction an N-(acyl)-sphingosylphosphoethanolamine = an N-(acyl)-sphingosyl-1,3-cyclic phosphate + ethanolamine. The enzyme catalyses a 1-acyl-sn-glycero-3-phosphocholine = a 1-acyl-sn-glycero-2,3-cyclic phosphate + choline. The catalysed reaction is a 1-acyl-sn-glycero-3-phosphoethanolamine = a 1-acyl-sn-glycero-2,3-cyclic phosphate + ethanolamine. Functionally, dermonecrotic toxins cleave the phosphodiester linkage between the phosphate and headgroup of certain phospholipids (sphingolipid and lysolipid substrates), forming an alcohol (often choline) and a cyclic phosphate. This toxin acts on sphingomyelin (SM). It may also act on ceramide phosphoethanolamine (CPE), lysophosphatidylcholine (LPC) and lysophosphatidylethanolamine (LPE), but not on lysophosphatidylserine (LPS), and lysophosphatidylglycerol (LPG). It acts by transphosphatidylation, releasing exclusively cyclic phosphate products as second products. Induces dermonecrosis, hemolysis, increased vascular permeability, edema, inflammatory response, and platelet aggregation. This Loxosceles hirsuta (Recluse spider) protein is Dermonecrotic toxin LhSicTox-alphaIA2bi.